A 116-amino-acid polypeptide reads, in one-letter code: MAEALGAQELYEKMFEQRFTANDKEYQEYLKREQDQPPIVEDWKMGNQRNTDRYRDNRHHRGWDGRQNWSSNSYNQSYGRGGWGNSYNQYRQDRHNYQQGHYTHNPSNQRFHSDRY.

The interaction with RNMT stretch occupies residues 1 to 55 (MAEALGAQELYEKMFEQRFTANDKEYQEYLKREQDQPPIVEDWKMGNQRNTDRYR). Positions 31–116 (KREQDQPPIV…SNQRFHSDRY (86 aa)) are disordered. An RNMT-activating domain motif is present at residues 36 to 42 (QPPIVED). The tract at residues 56 to 116 (DNRHHRGWDG…SNQRFHSDRY (61 aa)) is RNA-binding. Residues 67-78 (QNWSSNSYNQSY) show a composition bias toward low complexity. Positions 97 to 110 (YQQGHYTHNPSNQR) are enriched in polar residues.

It belongs to the RAM family.

Its subcellular location is the nucleus. Its function is as follows. Regulatory subunit of the mRNA-capping methyltransferase RNMT:RAMAC complex that methylates the N7 position of the added guanosine to the 5'-cap structure of mRNAs. Promotes the recruitment of the methyl donor, S-adenosyl-L-methionine, to RNMT. Regulates RNMT expression by a post-transcriptional stabilizing mechanism. Binds RNA. The polypeptide is RNA guanine-N7 methyltransferase activating subunit (ramac) (Xenopus tropicalis (Western clawed frog)).